Reading from the N-terminus, the 628-residue chain is Probable potassium transport system protein Kup (628 aa).

Helical transmembrane passes span 56–76, 109–129, 141–161, 174–194, 209–229, 253–273, 295–315, 343–363, 372–392, 400–420, and 425–445; these read ILSLVVWTLTVIVSLKYVLLI, LILGVFGTAIFFGDGVITPAI, AAPGLHRYVVPVTLVVLTLLF, FFGPVTAVWFIVLALLGVVHI, ALAFMWQHPGTAFVSLGAVVL, WFSLVMPALMINYFGQGAMLL, LIVLATLATVIASQALITAAF, IYVPFVNWGLYACIVLAVVTF, AYGIAVTTDMLITTTMTFFVI, WALCVAATGFFFLVDAMFFAA, and ILDGGWFPLAIGAAMFTLMMT.

Belongs to the HAK/KUP transporter (TC 2.A.72) family.

It localises to the cell inner membrane. It carries out the reaction K(+)(in) + H(+)(in) = K(+)(out) + H(+)(out). Its function is as follows. Transport of potassium into the cell. Likely operates as a K(+):H(+) symporter. The sequence is that of Probable potassium transport system protein Kup from Methylibium petroleiphilum (strain ATCC BAA-1232 / LMG 22953 / PM1).